A 1342-amino-acid polypeptide reads, in one-letter code: DNA-directed RNA polymerase subunit beta (1342 aa).

The protein belongs to the RNA polymerase beta chain family. In terms of assembly, the RNAP catalytic core consists of 2 alpha, 1 beta, 1 beta' and 1 omega subunit. When a sigma factor is associated with the core the holoenzyme is formed, which can initiate transcription.

It catalyses the reaction RNA(n) + a ribonucleoside 5'-triphosphate = RNA(n+1) + diphosphate. Its function is as follows. DNA-dependent RNA polymerase catalyzes the transcription of DNA into RNA using the four ribonucleoside triphosphates as substrates. In Actinobacillus pleuropneumoniae serotype 3 (strain JL03), this protein is DNA-directed RNA polymerase subunit beta.